A 113-amino-acid polypeptide reads, in one-letter code: Small ribosomal subunit protein bS6 (113 aa).

This sequence belongs to the bacterial ribosomal protein bS6 family.

Functionally, binds together with bS18 to 16S ribosomal RNA. This chain is Small ribosomal subunit protein bS6, found in Wigglesworthia glossinidia brevipalpis.